The sequence spans 127 residues: Small ribosomal subunit protein uS13 (127 aa).

The disordered stretch occupies residues 95–127 (GLPVHGQRTSTNARTRKGPRRAAVKKKGGAKKK). The segment covering 108–127 (RTRKGPRRAAVKKKGGAKKK) has biased composition (basic residues).

Belongs to the universal ribosomal protein uS13 family. In terms of assembly, part of the 30S ribosomal subunit. Forms a loose heterodimer with protein S19. Forms two bridges to the 50S subunit in the 70S ribosome.

In terms of biological role, located at the top of the head of the 30S subunit, it contacts several helices of the 16S rRNA. In the 70S ribosome it contacts the 23S rRNA (bridge B1a) and protein L5 of the 50S subunit (bridge B1b), connecting the 2 subunits; these bridges are implicated in subunit movement. Contacts the tRNAs in the A and P-sites. The polypeptide is Small ribosomal subunit protein uS13 (Desulfatibacillum aliphaticivorans).